The chain runs to 187 residues: Elongation factor P (187 aa).

Belongs to the elongation factor P family.

Its subcellular location is the cytoplasm. Its pathway is protein biosynthesis; polypeptide chain elongation. Involved in peptide bond synthesis. Stimulates efficient translation and peptide-bond synthesis on native or reconstituted 70S ribosomes in vitro. Probably functions indirectly by altering the affinity of the ribosome for aminoacyl-tRNA, thus increasing their reactivity as acceptors for peptidyl transferase. This chain is Elongation factor P, found in Mycobacteroides abscessus (strain ATCC 19977 / DSM 44196 / CCUG 20993 / CIP 104536 / JCM 13569 / NCTC 13031 / TMC 1543 / L948) (Mycobacterium abscessus).